The chain runs to 1146 residues: Myosin heavy chain kinase A (1146 aa).

The segment at Met1–Val25 is disordered. Residues Glu100–Leu120 are a coiled coil. The interval Ile158–Ser191 is disordered. The span at Gly172–Gly181 shows a compositional bias: gly residues. 2 coiled-coil regions span residues Gly187–Glu241 and Ser297–Ser502. A pseudosubstrate/autoinhibitory domain region spans residues Ser500 to Asn551. Positions Leu521–Lys534 are enriched in polar residues. The interval Leu521 to Ser540 is disordered. The catalytic stretch occupies residues Ile552–Ala852. An Alpha-type protein kinase domain is found at Glu564–Lys808. An ATP-binding site is contributed by Gly778 to Gly783. WD repeat units follow at residues Ser867–Asp897, Gly910–Ile938, Gly952–Asp980, Val993–Asp1021, Gly1033–Asp1061, Gly1073–Asp1101, and Ser1114–Glu1142.

The protein belongs to the protein kinase superfamily. Alpha-type protein kinase family. ALPK subfamily. In terms of assembly, oligomer. Mg(2+) is required as a cofactor. Mn(2+) serves as cofactor. The N-terminus is blocked.

It carries out the reaction L-threonyl-[myosin heavy-chain] + ATP = O-phospho-L-threonyl-[myosin heavy-chain] + ADP + H(+). Its function is as follows. Catalyzes its autophosphorylation, which is needed for enzymatic activity and phosphorylates myosin II heavy chain at a threonine in the C-terminal tail region. This phosphorylation is critical for regulating the assembly and disassembly of myosin II filament, affecting myosin localization during an array of cellular contractile events, including cytokinesis and capping of cell surface receptors as well as chemotactic cell locomotion. This is Myosin heavy chain kinase A (mhkA) from Dictyostelium discoideum (Social amoeba).